A 181-amino-acid chain; its full sequence is NAD(P)H-quinone oxidoreductase subunit I, chloroplastic (181 aa).

2 consecutive 4Fe-4S ferredoxin-type domains span residues 55–84 (GRIH…VDWE) and 95–124 (KSYS…MTEE). [4Fe-4S] cluster contacts are provided by cysteine 64, cysteine 67, cysteine 70, cysteine 74, cysteine 104, cysteine 107, cysteine 110, and cysteine 114.

This sequence belongs to the complex I 23 kDa subunit family. In terms of assembly, NDH is composed of at least 16 different subunits, 5 of which are encoded in the nucleus. [4Fe-4S] cluster is required as a cofactor.

Its subcellular location is the plastid. The protein resides in the chloroplast thylakoid membrane. It carries out the reaction a plastoquinone + NADH + (n+1) H(+)(in) = a plastoquinol + NAD(+) + n H(+)(out). The enzyme catalyses a plastoquinone + NADPH + (n+1) H(+)(in) = a plastoquinol + NADP(+) + n H(+)(out). Functionally, NDH shuttles electrons from NAD(P)H:plastoquinone, via FMN and iron-sulfur (Fe-S) centers, to quinones in the photosynthetic chain and possibly in a chloroplast respiratory chain. The immediate electron acceptor for the enzyme in this species is believed to be plastoquinone. Couples the redox reaction to proton translocation, and thus conserves the redox energy in a proton gradient. The protein is NAD(P)H-quinone oxidoreductase subunit I, chloroplastic of Physcomitrium patens (Spreading-leaved earth moss).